Consider the following 374-residue polypeptide: Acetylxylan esterase (374 aa).

Residues 1 to 22 (MVFSPRLSAFVALVALTNAATA) form the signal peptide. One can recognise a CBM1 domain in the interval 23–57 (VPMYGQCGGSGYTGPTQCDPGLVCVKLNDWYSQCQ). The ser/Thr/Pro-rich linker stretch occupies residues 58–99 (SGGAQPPVTTTSSPPVTVSPPPSTTTVAPPVATGPPAPEIPA). A disordered region spans residues 60–86 (GAQPPVTTTSSPPVTVSPPPSTTTVAP). The span at 63–73 (PPVTTTSSPPV) shows a compositional bias: low complexity. The catalytic stretch occupies residues 100-374 (GQLTQLRSFG…EVVAMDFFGL (275 aa)). N-linked (GlcNAc...) asparagine glycosylation is present at N114. S219 serves as the catalytic Charge relay system. N320 carries an N-linked (GlcNAc...) asparagine glycan.

This sequence belongs to the carbohydrate esterase 1 (CE1) family. AxeA subfamily. In terms of assembly, monomer. Glycosylated.

It is found in the secreted. The catalysed reaction is Deacetylation of xylans and xylo-oligosaccharides.. It participates in glycan degradation; xylan degradation. Its function is as follows. Acetylxylan esterase involved in the hydrolysis of xylan, a major structural heterogeneous polysaccharide found in plant biomass representing the second most abundant polysaccharide in the biosphere, after cellulose. Degrades acetylated xylans by cleaving acetyl side groups from the hetero-xylan backbone. The protein is Acetylxylan esterase of Coprinopsis cinerea (strain Okayama-7 / 130 / ATCC MYA-4618 / FGSC 9003) (Inky cap fungus).